The primary structure comprises 107 residues: uncharacterized protein (107 aa).

4 helical membrane-spanning segments follow: residues 9 to 28 (FLVF…LIME), 33 to 50 (SYII…SLNI), 55 to 72 (LAIA…AIHV), and 77 to 99 (YRVI…YLKG).

It is found in the cell membrane. This is an uncharacterized protein from Archaeoglobus fulgidus (strain ATCC 49558 / DSM 4304 / JCM 9628 / NBRC 100126 / VC-16).